The primary structure comprises 358 residues: Presenilin hop-1 (358 aa).

Topologically, residues 1–12 are cytoplasmic; that stretch reads MPRTKRVYSGKT. The chain crosses the membrane as a helical span at residues 13 to 33; it reads ITGVLYPVAICMLFVAINVKL. Residues 34 to 57 are Lumenal-facing; the sequence is SQPEQQEQSKVVYGLFHSYDTADS. A helical membrane pass occupies residues 58-78; sequence GTITLYLIGFLILTTSLGVFC. At 79-86 the chain is on the cytoplasmic side; the sequence is YQMKFYKA. Residues 87–107 form a helical membrane-spanning segment; it reads IKVYVLANSIGILLVYSVFHF. At 108 to 115 the chain is on the lumenal side; it reads QRIAEAQS. The helical transmembrane segment at 116-136 threads the bilayer; it reads IPVSVPTFFFLILQFGGLGIT. Topologically, residues 137 to 148 are cytoplasmic; the sequence is CLHWKSHRRLHQ. The helical transmembrane segment at 149–169 threads the bilayer; it reads FYLIMLAGLTAIFILNILPDW. T170 is a topological domain (lumenal). A helical transmembrane segment spans residues 171–191; that stretch reads VWMALTAISFWDIVAVLTPCG. D182 is a catalytic residue. Over 192–273 the chain is Cytoplasmic; it reads PLKMLVETAN…EVREVEGTIR (82 aa). The span at 221–240 shows a compositional bias: polar residues; that stretch reads EVDSPDTTRSNSTPLTEFNN. Positions 221–242 are disordered; it reads EVDSPDTTRSNSTPLTEFNNSS. The helical transmembrane segment at 274 to 294 threads the bilayer; the sequence is LGMGDFVFYSLMLGNTVQTCP. D278 is a catalytic residue. Over 295–297 the chain is Lumenal; the sequence is LPT. The chain crosses the membrane as a helical span at residues 298 to 318; that stretch reads VVACFVSNLVGLTITLPIVTL. Residues 319 to 321 are Cytoplasmic-facing; the sequence is SQT. The segment at residues 322–342 is an intramembrane region (helical); that stretch reads ALPALPFPLAIAAIFYFSSHI. The PAL motif lies at 324-326; the sequence is PAL. Residues 343-358 are Cytoplasmic-facing; the sequence is ALTPFTDLCTSQLILI.

Belongs to the peptidase A22A family. As to quaternary structure, homodimer. Component of the gamma-secretase complex, a complex probably composed of the presenilin homodimer (sel-12, hop-1 or spe-4), nicastrin (aph-2), aph-1 and pen-2. Weakly expressed.

The protein localises to the endoplasmic reticulum membrane. The protein resides in the golgi apparatus membrane. Probable catalytic subunit of the gamma-secretase complex, an endoprotease complex that catalyzes the intramembrane cleavage of integral membrane proteins such as Notch receptors (lin-12 or glp-1). Probably works redundantly of lin-12, which provides more presenilin function. In Caenorhabditis elegans, this protein is Presenilin hop-1 (hop-1).